We begin with the raw amino-acid sequence, 512 residues long: ETS translocation variant 3 (512 aa).

A DNA-binding region (ETS) is located at residues 35–116 (IQLWHFILEL…KGKRFTYKFN (82 aa)). The tract at residues 136 to 222 (VPQSAPPVPT…NAIGGGGIGH (87 aa)) is disordered. 3 positions are modified to phosphoserine: Ser-139, Ser-159, and Ser-315. The segment covering 158-184 (HSPTNDVQPGRFSASSLTASGQESSNG) has biased composition (polar residues). The disordered stretch occupies residues 336 to 512 (PEESTQFSIK…QGLATAAADA (177 aa)). A compositionally biased stretch (basic and acidic residues) spans 380-406 (IKVEPASEKDPESLRQSAREKEEHTQE). Lys-381 participates in a covalent cross-link: Glycyl lysine isopeptide (Lys-Gly) (interchain with G-Cter in SUMO2). Lys-388 carries the post-translational modification N6-acetyllysine; alternate. Lys-388 is covalently cross-linked (Glycyl lysine isopeptide (Lys-Gly) (interchain with G-Cter in SUMO2); alternate). The span at 443–452 (EPLEVTEDIE) shows a compositional bias: acidic residues. Basic and acidic residues-rich tracts occupy residues 453–468 (DRPG…KEDA) and 479–491 (RWND…ELSK).

It belongs to the ETS family.

The protein localises to the nucleus. Functionally, transcriptional repressor that contribute to growth arrest during terminal macrophage differentiation by repressing target genes involved in Ras-dependent proliferation. Represses MMP1 promoter activity. The protein is ETS translocation variant 3 (ETV3) of Pan troglodytes (Chimpanzee).